The following is a 403-amino-acid chain: METLDGVVVVGGGPVGLLTALKLGKAGIKVVVLEAEPGVSPSPRAVAYMPPTAAALDRFGLLQDIRKRAVMCPDFAYRHGNGELIAKMDWSVLSQDTQYPYMLLLGQNHVSNVIFQHLRELPNVEIRWNHRVEEVDQDDAYVTIETSSPGGTSRLRARWLAATDGARSTVRQKIGLTFDGITWDERLVATNVFYDFSLHGYSRANFVHDPVDWAVVVQLDKTGLWRVCYGEDASLSDAEVRRRLPERFKRLLPGAPTPDQYRVDHLNPYRVHQRCAAEFRRGRVVLAGDAAHATNPMGGLGLSGGVLDAEHLAEALIAVIKNGASTKTLDEYSIDRRKVFLEFTSPTATANFTWMKESDPAQRIRDDAMFKEAGTDRAVMRQFLLDLEKLNGRRVIEKKLKAA.

FAD-binding positions include 6-35 (GVVV…VLEA) and 279-289 (FRRGRVVLAGD).

Belongs to the PheA/TfdB FAD monooxygenase family. Monomer. FAD serves as cofactor.

The catalysed reaction is 4-nitrophenol + NADPH + O2 + H(+) = 1,4-benzoquinone + nitrite + NADP(+) + H2O. Its pathway is xenobiotic degradation; 4-nitrophenol degradation. Functionally, involved in the degradation of para-nitrophenol (4-NP). Catalyzes oxidation of 4-nitrophenol (4-NP) at position 4 with concomitant removal of the nitro group as nitrite and production of para-benzoquinone. This Pseudomonas sp. (strain WBC-3) protein is Para-nitrophenol 4-monooxygenase (pnpA).